The chain runs to 137 residues: uncharacterized protein (137 aa).

Helical transmembrane passes span 36-52 (LAPP…PFVL) and 113-129 (FYGY…IFCF).

It is found in the membrane. This is an uncharacterized protein from Saccharomyces cerevisiae (strain ATCC 204508 / S288c) (Baker's yeast).